Consider the following 356-residue polypeptide: tRNA N6-adenosine threonylcarbamoyltransferase (356 aa).

2 residues coordinate Fe cation: His-131 and His-135. Residues Leu-154 to Gly-158, Asp-187, Gly-200, and Asn-289 each bind substrate. Fe cation is bound at residue Asp-317.

The protein belongs to the KAE1 / TsaD family. Fe(2+) serves as cofactor.

Its subcellular location is the cytoplasm. The catalysed reaction is L-threonylcarbamoyladenylate + adenosine(37) in tRNA = N(6)-L-threonylcarbamoyladenosine(37) in tRNA + AMP + H(+). Its function is as follows. Required for the formation of a threonylcarbamoyl group on adenosine at position 37 (t(6)A37) in tRNAs that read codons beginning with adenine. Is involved in the transfer of the threonylcarbamoyl moiety of threonylcarbamoyl-AMP (TC-AMP) to the N6 group of A37, together with TsaE and TsaB. TsaD likely plays a direct catalytic role in this reaction. The sequence is that of tRNA N6-adenosine threonylcarbamoyltransferase from Ruthia magnifica subsp. Calyptogena magnifica.